Reading from the N-terminus, the 347-residue chain is S-adenosylmethionine:tRNA ribosyltransferase-isomerase (347 aa).

This sequence belongs to the QueA family. In terms of assembly, monomer.

It localises to the cytoplasm. It carries out the reaction 7-aminomethyl-7-carbaguanosine(34) in tRNA + S-adenosyl-L-methionine = epoxyqueuosine(34) in tRNA + adenine + L-methionine + 2 H(+). Its pathway is tRNA modification; tRNA-queuosine biosynthesis. Its function is as follows. Transfers and isomerizes the ribose moiety from AdoMet to the 7-aminomethyl group of 7-deazaguanine (preQ1-tRNA) to give epoxyqueuosine (oQ-tRNA). This is S-adenosylmethionine:tRNA ribosyltransferase-isomerase from Xylella fastidiosa (strain M23).